The primary structure comprises 359 residues: MSLGRGKYDFYIGLGLAMTSSIFIGGSFILKKKGLLRLARKGSMRAGQGGHAYLKEWLWWAGLLSMGAGEVANFAAYAFAPATLVTPLGALSVLVSAILSSYFLNERLNLHGKIGCLLSILGSTVMVIHAPKEEEIETLNEMSHKLGDPGFVVFATFVVIVALIFIFVVGPRHGQTNILVYITICSVIGAFSVSCVKGLGIAIKELLAGKPVLQHPLAWILLFSLVVCVSTQINYLNRALDIFNTSIVTPIYYVFFTTSVLTCSAILFKEWQDMPVDDVIGTLSGFFTIIVGIFLLHAFKDVSFSLASLPVSFRKDEKAMNGNLSSMYEVLNNNEDDLPCGIEHTGENISRRNGNLPSF.

The Extracellular portion of the chain corresponds to 1–9 (MSLGRGKYD). The chain crosses the membrane as a helical span at residues 10–30 (FYIGLGLAMTSSIFIGGSFIL). Residues 31-56 (KKKGLLRLARKGSMRAGQGGHAYLKE) lie on the Cytoplasmic side of the membrane. A helical transmembrane segment spans residues 57–77 (WLWWAGLLSMGAGEVANFAAY). Position 78 (alanine 78) is a topological domain, extracellular. Residues 79–99 (FAPATLVTPLGALSVLVSAIL) form a helical membrane-spanning segment. Residues 100–107 (SSYFLNER) are Cytoplasmic-facing. A helical membrane pass occupies residues 108-128 (LNLHGKIGCLLSILGSTVMVI). Residues 129–149 (HAPKEEEIETLNEMSHKLGDP) are Extracellular-facing. A helical transmembrane segment spans residues 150 to 170 (GFVVFATFVVIVALIFIFVVG). Residues 171–175 (PRHGQ) are Cytoplasmic-facing. The helical transmembrane segment at 176–196 (TNILVYITICSVIGAFSVSCV) threads the bilayer. Residues 197–215 (KGLGIAIKELLAGKPVLQH) are Extracellular-facing. Residues 216–236 (PLAWILLFSLVVCVSTQINYL) traverse the membrane as a helical segment. Residues 237–246 (NRALDIFNTS) are Cytoplasmic-facing. The helical transmembrane segment at 247–267 (IVTPIYYVFFTTSVLTCSAIL) threads the bilayer. At 268-278 (FKEWQDMPVDD) the chain is on the extracellular side. Residues 279–299 (VIGTLSGFFTIIVGIFLLHAF) form a helical membrane-spanning segment. Residues 300-359 (KDVSFSLASLPVSFRKDEKAMNGNLSSMYEVLNNNEDDLPCGIEHTGENISRRNGNLPSF) are Cytoplasmic-facing.

The protein belongs to the NIPA family. In terms of tissue distribution, widely expressed. Expressed at high levels in the kidney.

The protein localises to the cell membrane. The protein resides in the early endosome. The catalysed reaction is Mg(2+)(in) = Mg(2+)(out). Its function is as follows. Acts as a selective Mg(2+) transporter. In Mus musculus (Mouse), this protein is Magnesium transporter NIPA2 (Nipa2).